Reading from the N-terminus, the 445-residue chain is GTPase Der (445 aa).

EngA-type G domains follow at residues 3–166 and 180–353; these read PVIA…AERV and IRIG…ESCY. GTP is bound by residues 9–16, 56–60, 118–121, 186–193, 233–237, and 298–301; these read GRPNVGKS, DTGGI, NKTD, DTAGI, and NKWD. The region spanning 354 to 438 is the KH-like domain; it reads AKWTTNRLTR…PIIFEFKSAE (85 aa).

This sequence belongs to the TRAFAC class TrmE-Era-EngA-EngB-Septin-like GTPase superfamily. EngA (Der) GTPase family. Associates with the 50S ribosomal subunit.

GTPase that plays an essential role in the late steps of ribosome biogenesis. This is GTPase Der from Marinomonas sp. (strain MWYL1).